A 455-amino-acid polypeptide reads, in one-letter code: RQC trigger complex subunit RQT4 homolog (455 aa).

2 disordered regions span residues 64 to 98 and 118 to 148; these read STHS…SHPS and PASR…GVMT. Polar residues-rich tracts occupy residues 65 to 98 and 119 to 130; these read THSG…SHPS and ASRNKSQSNNIS. Serine 70 bears the Phosphoserine mark. Serine 380 carries the phosphoserine modification.

Component of the RQT (ribosome quality control trigger) complex.

Its subcellular location is the cytoplasm. It is found in the cytosol. Functionally, probably functions as part of the RQC trigger (RQT) complex that activates the ribosome quality control (RQC) pathway, a pathway that degrades nascent peptide chains during problematic translation. The chain is RQC trigger complex subunit RQT4 homolog from Schizosaccharomyces pombe (strain 972 / ATCC 24843) (Fission yeast).